Reading from the N-terminus, the 227-residue chain is UPF0173 metal-dependent hydrolase BCAH187_A4741 (227 aa).

This sequence belongs to the UPF0173 family.

This is UPF0173 metal-dependent hydrolase BCAH187_A4741 from Bacillus cereus (strain AH187).